Consider the following 110-residue polypeptide: Small ribosomal subunit protein bS16 (110 aa).

Residues 87–110 (ARNNPEKAVPRKERKAAAEAAAKK) form a disordered region.

Belongs to the bacterial ribosomal protein bS16 family.

The protein is Small ribosomal subunit protein bS16 of Rhodopseudomonas palustris (strain HaA2).